The sequence spans 447 residues: Multicopper oxidase mco (447 aa).

Residues methionine 1–lysine 25 show a composition bias toward basic and acidic residues. Residues methionine 1–serine 29 are disordered. Cu cation is bound by residues histidine 107, histidine 109, histidine 147, histidine 149, histidine 375, histidine 378, histidine 380, histidine 428, cysteine 429, histidine 430, histidine 434, and methionine 439.

The protein belongs to the multicopper oxidase family. Cu cation serves as cofactor.

It localises to the cytoplasm. In terms of biological role, may be involved in copper homeostasis and oxidative stress response. This is Multicopper oxidase mco (mco) from Staphylococcus haemolyticus (strain JCSC1435).